Reading from the N-terminus, the 437-residue chain is Alpha-galactosidase 3 (437 aa).

An N-terminal signal peptide occupies residues 1–30 (MVIMKKMKDSVLFLVVGLFSLSVLVSQSIA). 2 disulfides stabilise this stretch: C85–C117 and C165–C195. The N-linked (GlcNAc...) asparagine glycan is linked to N88. Residues 115 to 116 (DD) and K191 contribute to the substrate site. D193 (nucleophile) is an active-site residue. N-linked (GlcNAc...) asparagine glycosylation is present at N214. Substrate contacts are provided by residues 226–230 (EWGVD), R244, and D248. D248 acts as the Proton donor in catalysis. 3 N-linked (GlcNAc...) asparagine glycosylation sites follow: N250, N315, and N408.

It belongs to the glycosyl hydrolase 27 family. As to quaternary structure, homodimer.

The protein localises to the secreted. It localises to the cell wall. It is found in the extracellular space. The protein resides in the apoplast. Its subcellular location is the vacuole. The enzyme catalyses Hydrolysis of terminal, non-reducing alpha-D-galactose residues in alpha-D-galactosides, including galactose oligosaccharides, galactomannans and galactolipids.. May regulate leaf (and possibly other organ) development by functioning in cell wall loosening and cell wall expansion. This chain is Alpha-galactosidase 3, found in Arabidopsis thaliana (Mouse-ear cress).